Here is a 96-residue protein sequence, read N- to C-terminus: MNLRPLHDRVIVKRIESETTTASGIVIPDNAAEKPDQGEVLAVGPGKKNDKGELIALNVKVGDRVLFGKYSGQTVKVHRDELLVMKEDDLFAVVEK.

The protein belongs to the GroES chaperonin family. In terms of assembly, heptamer of 7 subunits arranged in a ring. Interacts with the chaperonin GroEL.

The protein resides in the cytoplasm. In terms of biological role, together with the chaperonin GroEL, plays an essential role in assisting protein folding. The GroEL-GroES system forms a nano-cage that allows encapsulation of the non-native substrate proteins and provides a physical environment optimized to promote and accelerate protein folding. GroES binds to the apical surface of the GroEL ring, thereby capping the opening of the GroEL channel. The polypeptide is Co-chaperonin GroES (Verminephrobacter eiseniae (strain EF01-2)).